A 279-amino-acid polypeptide reads, in one-letter code: Pantothenate synthetase (279 aa).

Met-26 to His-33 serves as a coordination point for ATP. His-33 serves as the catalytic Proton donor. A (R)-pantoate-binding site is contributed by Gln-57. Gln-57 is a beta-alanine binding site. Gly-144–Asp-147 contributes to the ATP binding site. A (R)-pantoate-binding site is contributed by Gln-150. Residues Val-173 and Leu-181–Arg-184 each bind ATP.

Belongs to the pantothenate synthetase family. As to quaternary structure, homodimer.

The protein resides in the cytoplasm. The enzyme catalyses (R)-pantoate + beta-alanine + ATP = (R)-pantothenate + AMP + diphosphate + H(+). Its pathway is cofactor biosynthesis; (R)-pantothenate biosynthesis; (R)-pantothenate from (R)-pantoate and beta-alanine: step 1/1. In terms of biological role, catalyzes the condensation of pantoate with beta-alanine in an ATP-dependent reaction via a pantoyl-adenylate intermediate. This chain is Pantothenate synthetase, found in Burkholderia lata (strain ATCC 17760 / DSM 23089 / LMG 22485 / NCIMB 9086 / R18194 / 383).